The sequence spans 381 residues: tRNA pseudouridine synthase D (381 aa).

Asp81 functions as the Nucleophile in the catalytic mechanism. The 176-residue stretch at 160–335 (GMPNYFGSQR…TLGSRRFFWV (176 aa)) folds into the TRUD domain.

It belongs to the pseudouridine synthase TruD family.

The enzyme catalyses uridine(13) in tRNA = pseudouridine(13) in tRNA. In terms of biological role, responsible for synthesis of pseudouridine from uracil-13 in transfer RNAs. This chain is tRNA pseudouridine synthase D, found in Helicobacter pylori (strain G27).